The primary structure comprises 292 residues: L-serine dehydratase, alpha chain (292 aa).

It belongs to the iron-sulfur dependent L-serine dehydratase family. Heterooctamer of four alpha chains and four beta chains. [4Fe-4S] cluster is required as a cofactor.

The enzyme catalyses L-serine = pyruvate + NH4(+). Its pathway is carbohydrate biosynthesis; gluconeogenesis. The sequence is that of L-serine dehydratase, alpha chain (sdhA) from Peptoniphilus asaccharolyticus (Peptostreptococcus asaccharolyticus).